Reading from the N-terminus, the 235-residue chain is Nucleoprotein (235 aa).

Positions 17, 18, 47, 50, 75, 76, 81, 94, 124, 126, 129, 167, 177, 179, 180, 183, 184, and 185 each coordinate RNA.

Belongs to the orthobunyavirus nucleocapsid protein family. Homotetramer. Binds the viral genomic RNA. Interacts with host PABP1.

The protein resides in the virion. Encapsidates the genome protecting it from nucleases. The encapsidated genomic RNA is termed the nucleocapsid (NC) and serves as template for transcription and replication. The NC have a helical organization. Seems to participate in the nuclear relocalization of host PABP1, thereby inhibiting host cellular translation. The sequence is that of Nucleoprotein (N) from Cervidae (Deer).